A 258-amino-acid chain; its full sequence is 14-3-3 protein homolog (258 aa).

This sequence belongs to the 14-3-3 family.

The protein is 14-3-3 protein homolog of Encephalitozoon cuniculi (strain GB-M1) (Microsporidian parasite).